A 311-amino-acid polypeptide reads, in one-letter code: 4-diphosphocytidyl-2-C-methyl-D-erythritol kinase (311 aa).

Lysine 16 is a catalytic residue. Residue 100 to 110 (PIGAGLAGGSS) coordinates ATP. Aspartate 142 is an active-site residue.

It belongs to the GHMP kinase family. IspE subfamily.

It carries out the reaction 4-CDP-2-C-methyl-D-erythritol + ATP = 4-CDP-2-C-methyl-D-erythritol 2-phosphate + ADP + H(+). The protein operates within isoprenoid biosynthesis; isopentenyl diphosphate biosynthesis via DXP pathway; isopentenyl diphosphate from 1-deoxy-D-xylulose 5-phosphate: step 3/6. Catalyzes the phosphorylation of the position 2 hydroxy group of 4-diphosphocytidyl-2C-methyl-D-erythritol. The sequence is that of 4-diphosphocytidyl-2-C-methyl-D-erythritol kinase from Prochlorococcus marinus (strain MIT 9301).